The following is a 225-amino-acid chain: UPF0758 protein Shewmr7_0359 (225 aa).

Residues 102–224 (VLTNPDLTRD…IVSFAERGWI (123 aa)) enclose the MPN domain. Zn(2+) is bound by residues His173, His175, and Asp186. Residues 173-186 (HNHPSGIAEPSQAD) carry the JAMM motif motif.

Belongs to the UPF0758 family.

This Shewanella sp. (strain MR-7) protein is UPF0758 protein Shewmr7_0359.